We begin with the raw amino-acid sequence, 218 residues long: MSDEPKGAILQRDKLTYAIVPRTPCGLLTPDVLDAVSRVCRKYEVPIIKITSGQRLALVGMKKEAVEPMWEELRLDVGRAVELCVHYVQACPGTAVCRFGLQDSLGIGVAIEEEYVGHDFPAKVKFGISGCPFCCGESYLRDVGLVGTKKGWTLIVGGNSGGHPRIGDVLAEELSTDEAKGLIRKFMEFYRDNSGKRLRVSKFVEKTGIEAIRQAVLG.

[4Fe-4S] cluster-binding residues include cysteine 91, cysteine 97, cysteine 131, and cysteine 135. Residue cysteine 135 coordinates siroheme.

Functionally, this enzyme catalyzes the 6-electron reduction of sulfite to sulfide. This is one of several activities required for the biosynthesis of L-cysteine from sulfate. The polypeptide is Sulfite reductase, assimilatory-type (Nitratidesulfovibrio vulgaris (strain ATCC 29579 / DSM 644 / CCUG 34227 / NCIMB 8303 / VKM B-1760 / Hildenborough) (Desulfovibrio vulgaris)).